A 150-amino-acid chain; its full sequence is Arginine repressor (150 aa).

This sequence belongs to the ArgR family.

It is found in the cytoplasm. Its pathway is amino-acid biosynthesis; L-arginine biosynthesis [regulation]. Its function is as follows. Regulates arginine biosynthesis genes. This is Arginine repressor from Clostridium botulinum (strain Loch Maree / Type A3).